The sequence spans 257 residues: Ribonuclease HII (257 aa).

An RNase H type-2 domain is found at 72–257; it reads TYIAGIDEVG…FAPIKDMIQK (186 aa). A divalent metal cation-binding residues include D78, E79, and D170.

Belongs to the RNase HII family. Mn(2+) serves as cofactor. It depends on Mg(2+) as a cofactor.

The protein localises to the cytoplasm. It catalyses the reaction Endonucleolytic cleavage to 5'-phosphomonoester.. Its function is as follows. Endonuclease that specifically degrades the RNA of RNA-DNA hybrids. The protein is Ribonuclease HII of Bacillus cereus (strain ATCC 14579 / DSM 31 / CCUG 7414 / JCM 2152 / NBRC 15305 / NCIMB 9373 / NCTC 2599 / NRRL B-3711).